Here is a 291-residue protein sequence, read N- to C-terminus: Pyridoxal 5'-phosphate synthase subunit PdxS (291 aa).

Asp-23 is a D-ribose 5-phosphate binding site. Residue Lys-80 is the Schiff-base intermediate with D-ribose 5-phosphate of the active site. Gly-152 contributes to the D-ribose 5-phosphate binding site. Arg-164 is a binding site for D-glyceraldehyde 3-phosphate. Residues Gly-213 and 234–235 contribute to the D-ribose 5-phosphate site; that span reads GS.

This sequence belongs to the PdxS/SNZ family. In the presence of PdxT, forms a dodecamer of heterodimers.

It carries out the reaction aldehydo-D-ribose 5-phosphate + D-glyceraldehyde 3-phosphate + L-glutamine = pyridoxal 5'-phosphate + L-glutamate + phosphate + 3 H2O + H(+). Its pathway is cofactor biosynthesis; pyridoxal 5'-phosphate biosynthesis. Its function is as follows. Catalyzes the formation of pyridoxal 5'-phosphate from ribose 5-phosphate (RBP), glyceraldehyde 3-phosphate (G3P) and ammonia. The ammonia is provided by the PdxT subunit. Can also use ribulose 5-phosphate and dihydroxyacetone phosphate as substrates, resulting from enzyme-catalyzed isomerization of RBP and G3P, respectively. This is Pyridoxal 5'-phosphate synthase subunit PdxS from Bifidobacterium longum (strain DJO10A).